Consider the following 231-residue polypeptide: Aldehyde decarbonylase (231 aa).

The Fe cation site is built by E32, E60, H63, E115, and H147.

Belongs to the aldehyde decarbonylase family. The cofactor is Binds 2 metal cations per subunit. The catalytic dinuclear metal-binding site could be either a di-iron or a manganese-iron cofactor..

It carries out the reaction a long-chain fatty aldehyde + 2 NADPH + O2 + H(+) = a long-chain alkane + formate + 2 NADP(+) + H2O. Its function is as follows. Catalyzes the decarbonylation of fatty aldehydes to alkanes. Requires the presence of ferredoxin, ferredoxin reductase and NADPH for in vitro decarbonylase activity. Involved in the biosynthesis of alkanes, mainly heptadecane and pentadecane. The chain is Aldehyde decarbonylase from Synechocystis sp. (strain ATCC 27184 / PCC 6803 / Kazusa).